A 152-amino-acid chain; its full sequence is UPF0178 protein Bcer98_3021 (152 aa).

It belongs to the UPF0178 family.

This Bacillus cytotoxicus (strain DSM 22905 / CIP 110041 / 391-98 / NVH 391-98) protein is UPF0178 protein Bcer98_3021.